We begin with the raw amino-acid sequence, 1088 residues long: Ran-binding protein 17 (1088 aa).

The residue at position 2 (Ala2) is an N-acetylalanine. Ser569 bears the Phosphoserine mark.

This sequence belongs to the exportin family. Binds to nucleoporins and the GTP-bound form of Ran. Highly expressed in testis, moderately in pancreas and weakly in other tissues studied.

It localises to the cytoplasm. The protein localises to the nucleus. The protein resides in the nuclear pore complex. In terms of biological role, may function as a nuclear transport receptor. The chain is Ran-binding protein 17 (RANBP17) from Homo sapiens (Human).